The primary structure comprises 298 residues: ATP synthase gamma chain (298 aa).

The protein belongs to the ATPase gamma chain family. As to quaternary structure, F-type ATPases have 2 components, CF(1) - the catalytic core - and CF(0) - the membrane proton channel. CF(1) has five subunits: alpha(3), beta(3), gamma(1), delta(1), epsilon(1). CF(0) has three main subunits: a, b and c.

The protein localises to the cell inner membrane. Functionally, produces ATP from ADP in the presence of a proton gradient across the membrane. The gamma chain is believed to be important in regulating ATPase activity and the flow of protons through the CF(0) complex. The polypeptide is ATP synthase gamma chain (Francisella tularensis subsp. tularensis (strain FSC 198)).